Here is a 298-residue protein sequence, read N- to C-terminus: Acetyl-coenzyme A carboxylase carboxyl transferase subunit beta (298 aa).

The region spanning 26–295 is the CoA carboxyltransferase N-terminal domain; the sequence is LWIKCPETGE…DNANAVVPLA (270 aa).

Belongs to the AccD/PCCB family. As to quaternary structure, acetyl-CoA carboxylase is a heterohexamer composed of biotin carboxyl carrier protein (AccB), biotin carboxylase (AccC) and two subunits each of ACCase subunit alpha (AccA) and ACCase subunit beta (AccD).

It localises to the cytoplasm. It catalyses the reaction N(6)-carboxybiotinyl-L-lysyl-[protein] + acetyl-CoA = N(6)-biotinyl-L-lysyl-[protein] + malonyl-CoA. The protein operates within lipid metabolism; malonyl-CoA biosynthesis; malonyl-CoA from acetyl-CoA: step 1/1. Its function is as follows. Component of the acetyl coenzyme A carboxylase (ACC) complex. Biotin carboxylase (BC) catalyzes the carboxylation of biotin on its carrier protein (BCCP) and then the CO(2) group is transferred by the transcarboxylase to acetyl-CoA to form malonyl-CoA. This Agrobacterium fabrum (strain C58 / ATCC 33970) (Agrobacterium tumefaciens (strain C58)) protein is Acetyl-coenzyme A carboxylase carboxyl transferase subunit beta.